The primary structure comprises 256 residues: Imidazole glycerol phosphate synthase subunit HisF (256 aa).

Residues D11 and D130 contribute to the active site.

It belongs to the HisA/HisF family. As to quaternary structure, heterodimer of HisH and HisF.

Its subcellular location is the cytoplasm. It catalyses the reaction 5-[(5-phospho-1-deoxy-D-ribulos-1-ylimino)methylamino]-1-(5-phospho-beta-D-ribosyl)imidazole-4-carboxamide + L-glutamine = D-erythro-1-(imidazol-4-yl)glycerol 3-phosphate + 5-amino-1-(5-phospho-beta-D-ribosyl)imidazole-4-carboxamide + L-glutamate + H(+). It participates in amino-acid biosynthesis; L-histidine biosynthesis; L-histidine from 5-phospho-alpha-D-ribose 1-diphosphate: step 5/9. Its function is as follows. IGPS catalyzes the conversion of PRFAR and glutamine to IGP, AICAR and glutamate. The HisF subunit catalyzes the cyclization activity that produces IGP and AICAR from PRFAR using the ammonia provided by the HisH subunit. The sequence is that of Imidazole glycerol phosphate synthase subunit HisF from Prochlorococcus marinus (strain MIT 9312).